We begin with the raw amino-acid sequence, 1321 residues long: Bile salt export pump (1321 aa).

The Cytoplasmic portion of the chain corresponds to 1–62; it reads MSDSVILRSV…FSSWTDIWLM (62 aa). Residues 62-385 form the ABC transmembrane type-1 1 domain; the sequence is MCMGSLCACI…ASPCLEAFAA (324 aa). The chain crosses the membrane as a helical span at residues 63 to 83; sequence CMGSLCACIHGIAQPGVLLIF. Residues 84 to 147 are Extracellular-facing; it reads GTMTDVFIDY…MIRFAGYYAG (64 aa). N-linked (GlcNAc...) asparagine glycans are attached at residues Asn109, Asn116, Asn122, and Asn125. Residues 148-168 traverse the membrane as a helical segment; the sequence is IGIAVLTTGYIQICFWGIAAA. The Cytoplasmic portion of the chain corresponds to 169–215; the sequence is HQIQKMRKSYFRKIMRMGIGWVDCNSVGKLNTPFSVDFNKINDSSAD. The chain crosses the membrane as a helical span at residues 216 to 236; that stretch reads QLAIFIQGMTSPIFGFLVGFS. Residues 237 to 240 lie on the Extracellular side of the membrane; that stretch reads QWWK. A helical transmembrane segment spans residues 241 to 261; sequence LTLVIISVSPLIGLGAAIIGL. Topologically, residues 262–319 are cytoplasmic; the sequence is SVSKFTDYELKAYAKAGSVADEVISSMRTVAAFGGEKKEVERYEKNLVFAQRWGIRKG. A helical transmembrane segment spans residues 320-340; that stretch reads IVMGFFTGYMWCLIFFCYALA. At 341 to 353 the chain is on the extracellular side; the sequence is FWYGSKLVLEEGE. Residues 354-374 traverse the membrane as a helical segment; it reads YSPGALVQIFLSVIIGALNLG. Over 375–755 the chain is Cytoplasmic; the sequence is NASPCLEAFA…KLNAPEWPYM (381 aa). Residues 420 to 656 enclose the ABC transporter 1 domain; it reads IEFHNVTFHY…KGVYFALVTL (237 aa). 455 to 462 is an ATP binding site; sequence GPSGAGKS. Position 586 is a phosphothreonine (Thr586). At Ser587 the chain carries Phosphoserine. Residues 651–672 are interaction with HAX1; that stretch reads FALVTLQSQRNQGDQEENEKDA. Residues 659–735 are disordered; that stretch reads QRNQGDQEEN…KDKDLPAQED (77 aa). Positions 664-677 are enriched in acidic residues; it reads DQEENEKDATEDDI. Residues Ser690, Ser701, and Ser704 each carry the phosphoserine modification. The span at 714 to 731 shows a compositional bias: basic and acidic residues; the sequence is VEDHKSTHEEDRKDKDLP. Residues 755 to 1043 enclose the ABC transmembrane type-1 2 domain; it reads MLLGSMGAAV…ASSYTPSYAK (289 aa). Residues 756-776 form a helical membrane-spanning segment; sequence LLGSMGAAVNGAVTPLYAFLF. The Extracellular segment spans residues 777–794; the sequence is SQILGTFSLPDKEEQRSQ. Residues 795 to 815 form a helical membrane-spanning segment; the sequence is INGICLLFVTLGCVSFFTQFL. The Cytoplasmic segment spans residues 816-869; the sequence is QGYTFAKSGELLTKRLRKFGFRAMLGQDIGWFDDLRNSPGALTTRLATDASQVQ. A run of 2 helical transmembrane segments spans residues 870-890 and 891-911; these read GATG…TVAM and IIAF…FPFL. Residues 912–979 lie on the Cytoplasmic side of the membrane; it reads ALSGALQTKM…PYKMAIKKAN (68 aa). The chain crosses the membrane as a helical span at residues 980–1000; the sequence is VYGLCFGFSQCITFIANSASY. The Extracellular segment spans residues 1001 to 1011; sequence RYGGYLISNEG. A helical membrane pass occupies residues 1012–1032; it reads LHFSYVFRVISAVVLSATALG. Residues 1033 to 1321 are Cytoplasmic-facing; sequence RASSYTPSYA…KLVTTGSPIS (289 aa). One can recognise an ABC transporter 2 domain in the interval 1078-1316; sequence IDFVDCKFTY…KGAYYKLVTT (239 aa). 1113-1120 contacts ATP; that stretch reads GSSGCGKS. Residues Ser1214 and Ser1321 each carry the phosphoserine modification.

Belongs to the ABC transporter superfamily. ABCB family. Multidrug resistance exporter (TC 3.A.1.201) subfamily. In terms of assembly, interacts with HAX1. Interacts with the adapter protein complex 2 (AP-2) throught AP2A2 or AP2A1; this interaction regulates cell membrane expression of ABCB11 through its internalization in a clathrin-dependent manner and its subsequent degradation. Post-translationally, N-glycosylated. Ubiquitinated; short-chain ubiquitination regulates cell-Surface expression of ABCB11. As to expression, expressed predominantly, if not exclusively in the liver, where it was further localized to the canalicular microvilli and to subcanalicular vesicles of the hepatocytes by in situ.

Its subcellular location is the apical cell membrane. It is found in the recycling endosome membrane. The protein localises to the endosome. It localises to the cell membrane. It catalyses the reaction cholate(in) + ATP + H2O = cholate(out) + ADP + phosphate + H(+). The enzyme catalyses taurocholate(in) + ATP + H2O = taurocholate(out) + ADP + phosphate + H(+). The catalysed reaction is glycocholate(in) + ATP + H2O = glycocholate(out) + ADP + phosphate + H(+). It carries out the reaction glycochenodeoxycholate(in) + ATP + H2O = glycochenodeoxycholate(out) + ADP + phosphate + H(+). It catalyses the reaction taurochenodeoxycholate(in) + ATP + H2O = taurochenodeoxycholate(out) + ADP + phosphate + H(+). The enzyme catalyses glycoursodeoxycholate(in) + ATP + H2O = glycoursodeoxycholate(out) + ADP + phosphate + H(+). The catalysed reaction is tauroursodeoxycholate(in) + ATP + H2O = tauroursodeoxycholate(out) + ADP + phosphate + H(+). It carries out the reaction taurodeoxycholate(in) + ATP + H2O = taurodeoxycholate(out) + ADP + phosphate + H(+). It catalyses the reaction taurolithocholate 3-sulfate(in) + ATP + H2O = taurolithocholate 3-sulfate(out) + ADP + phosphate + H(+). The enzyme catalyses pravastatin(in) + ATP + H2O = pravastatin(out) + ADP + phosphate + H(+). With respect to regulation, the uptake of taurocholate is inhibited by taurolithocholate sulfate with an IC(50) of 9 uM. Pravastatin competitively inhibits the transport of taurocholic acid. Cyclosporin A, glibenclamide, rifampicin and troglitazonestrongly competitively inhibit the transport activity of taurocholate. The canalicular transport activity of taurocholate is strongly dependent on canalicular membrane cholesterol content. The uptake of taurocholate is increased by short- and medium-chain fatty acids. Cholesterol increases transport capacity of taurocholate without affecting the affinity for the substrate. Functionally, catalyzes the transport of the major hydrophobic bile salts, such as taurine and glycine-conjugated cholic acid across the canalicular membrane of hepatocytes in an ATP-dependent manner, therefore participates in hepatic bile acid homeostasis and consequently to lipid homeostasis through regulation of biliary lipid secretion in a bile salts dependent manner. Transports taurine-conjugated bile salts more rapidly than glycine-conjugated bile salts. Also transports non-bile acid compounds, such as pravastatin and fexofenadine in an ATP-dependent manner and may be involved in their biliary excretion. In Oryctolagus cuniculus (Rabbit), this protein is Bile salt export pump.